The following is a 432-amino-acid chain: Phytase AppA (432 aa).

Residues 1–22 form the signal peptide; the sequence is MKAILIPFLSLLIPLTPQSAFA. Position 38 (Arg-38) interacts with 1D-myo-inositol hexakisphosphate. His-39 functions as the Nucleophile in the catalytic mechanism. 1D-myo-inositol hexakisphosphate-binding positions include 42-46 and Arg-114; that span reads RAPTK. 4 disulfide bridges follow: Cys-99–Cys-130, Cys-155–Cys-430, Cys-200–Cys-210, and Cys-404–Cys-413. 1D-myo-inositol hexakisphosphate-binding positions include Arg-289 and 325–327; that span reads HDT. Residue Asp-326 is the Proton donor of the active site.

Belongs to the histidine acid phosphatase family. As to quaternary structure, monomer.

Its subcellular location is the periplasm. The catalysed reaction is 1D-myo-inositol hexakisphosphate + H2O = 1D-myo-inositol 1,2,3,4,5-pentakisphosphate + phosphate. It catalyses the reaction 1D-myo-inositol 1,2,3,4,5-pentakisphosphate + H2O = 1D-myo-inositol 2,3,4,5-tetrakisphosphate + phosphate. The enzyme catalyses 1D-myo-inositol 2,3,4,5-tetrakisphosphate + H2O = 1D-myo-inositol 2,4,5-triphosphate + phosphate. It carries out the reaction 1D-myo-inositol 2,4,5-triphosphate + H2O = 1D-myo-inositol 2,5-bisphosphate + phosphate. The catalysed reaction is 1D-myo-inositol 2,5-bisphosphate + H2O = 1D-myo-inositol 2-phosphate + phosphate. It catalyses the reaction GTP + H2O = GDP + phosphate + H(+). With respect to regulation, contains three consecutive and one non-consecutive disulfide bonds and shows a strong dependence on DsbC for its full activity. Competitively inhibited by tartaric acid and by sodium fluorid. Its function is as follows. Catalyzes the hydrolysis of phytate (or myo-inositol hexakisphosphate, an indigestible organic form of phosphorus that is found in many plant tissues) to myo-inositol and inorganic phosphate. Dephosphorylates phytate in a stereospecific way by sequential removal of phosphate groups to produce myo-inositol 2-monophosphate. Also shows phosphoanhydride phosphatase activity and hydrolyzes the distal phosphoryl residues of GTP, the 5'-beta-phosphoryl residue of the regulatory nucleotide ppGpp and tripolyphosphates. Does not split most phosphomonoesters with the exception of the synthetic substrate p-nitrophenyl phosphate (pNPP), 2,3-bisphosphoglycerate and fructose 1,6-bisphosphate. The chain is Phytase AppA from Escherichia coli (strain K12).